The chain runs to 122 residues: Large ribosomal subunit protein bL19c (122 aa).

Belongs to the bacterial ribosomal protein bL19 family.

It is found in the plastid. The protein resides in the chloroplast. This Gracilaria tenuistipitata var. liui (Red alga) protein is Large ribosomal subunit protein bL19c.